A 419-amino-acid polypeptide reads, in one-letter code: Serine hydroxymethyltransferase (419 aa).

(6S)-5,6,7,8-tetrahydrofolate contacts are provided by residues leucine 121 and 125 to 127 (GHL). An N6-(pyridoxal phosphate)lysine modification is found at lysine 230.

It belongs to the SHMT family. Homodimer. It depends on pyridoxal 5'-phosphate as a cofactor.

It localises to the cytoplasm. It catalyses the reaction (6R)-5,10-methylene-5,6,7,8-tetrahydrofolate + glycine + H2O = (6S)-5,6,7,8-tetrahydrofolate + L-serine. It participates in one-carbon metabolism; tetrahydrofolate interconversion. It functions in the pathway amino-acid biosynthesis; glycine biosynthesis; glycine from L-serine: step 1/1. Functionally, catalyzes the reversible interconversion of serine and glycine with tetrahydrofolate (THF) serving as the one-carbon carrier. This reaction serves as the major source of one-carbon groups required for the biosynthesis of purines, thymidylate, methionine, and other important biomolecules. Also exhibits THF-independent aldolase activity toward beta-hydroxyamino acids, producing glycine and aldehydes, via a retro-aldol mechanism. The chain is Serine hydroxymethyltransferase from Vesicomyosocius okutanii subsp. Calyptogena okutanii (strain HA).